A 192-amino-acid chain; its full sequence is Epididymal-specific lipocalin-12 (192 aa).

Residues 1–19 (MRLLCGLWLWLSLLKVLQA) form the signal peptide. The cysteines at positions 88 and 192 are disulfide-linked.

Belongs to the calycin superfamily. Lipocalin family. Monomer.

Its subcellular location is the secreted. In terms of biological role, binds all-trans retinoic acid and may act as a retinoid carrier protein within the epididymis. May play a role in male fertility. The polypeptide is Epididymal-specific lipocalin-12 (LCN12) (Homo sapiens (Human)).